The chain runs to 277 residues: Proteasome subunit beta type-7 (277 aa).

The propeptide at 1–43 is removed in mature form; sequence MAAVSVYAPPVGGFSFDNCRRNAVLEADFAKRGYKLPKVRKTG. Thr-44 acts as the Nucleophile in catalysis.

This sequence belongs to the peptidase T1B family. In terms of assembly, the 26S proteasome consists of a 20S proteasome core and two 19S regulatory subunits. The 20S proteasome core is a barrel-shaped complex made of 28 subunits that are arranged in four stacked rings. The two outer rings are each formed by seven alpha subunits, and the two inner rings are formed by seven beta subunits. The proteolytic activity is exerted by three beta-subunits PSMB5, PSMB6 and PSMB7. As to quaternary structure, (Microbial infection) Interacts with HIV-1 Tat protein. As to expression, expressed at a low level in colonic mucosa. Up-regulated in colorectal cancer tissues.

It is found in the cytoplasm. It localises to the nucleus. The enzyme catalyses Cleavage of peptide bonds with very broad specificity.. Functionally, component of the 20S core proteasome complex involved in the proteolytic degradation of most intracellular proteins. This complex plays numerous essential roles within the cell by associating with different regulatory particles. Associated with two 19S regulatory particles, forms the 26S proteasome and thus participates in the ATP-dependent degradation of ubiquitinated proteins. The 26S proteasome plays a key role in the maintenance of protein homeostasis by removing misfolded or damaged proteins that could impair cellular functions, and by removing proteins whose functions are no longer required. Associated with the PA200 or PA28, the 20S proteasome mediates ubiquitin-independent protein degradation. This type of proteolysis is required in several pathways including spermatogenesis (20S-PA200 complex) or generation of a subset of MHC class I-presented antigenic peptides (20S-PA28 complex). Within the 20S core complex, PSMB7 displays a trypsin-like activity. This Homo sapiens (Human) protein is Proteasome subunit beta type-7.